The primary structure comprises 338 residues: Protein SPATA31F3 (338 aa).

Residues 7–29 form a helical membrane-spanning segment; that stretch reads VLWDVGYPLYTYGSICIIALIIW. A Phosphoserine modification is found at Ser152. The span at 290–306 shows a compositional bias: basic and acidic residues; that stretch reads DRTKNIEKSPTVTKDHV. A disordered region spans residues 290-338; sequence DRTKNIEKSPTVTKDHVWGATTQKTTEDPEAQPPSTEEEGLIFCDAPSA.

The protein belongs to the SPATA31 family.

The protein resides in the membrane. In Homo sapiens (Human), this protein is Protein SPATA31F3.